The sequence spans 429 residues: Glutamate-1-semialdehyde 2,1-aminomutase 1 (429 aa).

The residue at position 268 (K268) is an N6-(pyridoxal phosphate)lysine.

It belongs to the class-III pyridoxal-phosphate-dependent aminotransferase family. HemL subfamily. In terms of assembly, homodimer. Pyridoxal 5'-phosphate serves as cofactor.

It localises to the cytoplasm. It carries out the reaction (S)-4-amino-5-oxopentanoate = 5-aminolevulinate. The protein operates within porphyrin-containing compound metabolism; protoporphyrin-IX biosynthesis; 5-aminolevulinate from L-glutamyl-tRNA(Glu): step 2/2. In Lysinibacillus sphaericus (strain C3-41), this protein is Glutamate-1-semialdehyde 2,1-aminomutase 1.